Reading from the N-terminus, the 372-residue chain is Probable L-tyrosine/L-aspartate decarboxylase (372 aa).

Lys215 is subject to N6-(pyridoxal phosphate)lysine.

This sequence belongs to the group II decarboxylase family. MfnA subfamily. Requires pyridoxal 5'-phosphate as cofactor.

It catalyses the reaction L-tyrosine + H(+) = tyramine + CO2. The enzyme catalyses L-aspartate + H(+) = beta-alanine + CO2. It participates in cofactor biosynthesis; methanofuran biosynthesis. The protein operates within cofactor biosynthesis; coenzyme A biosynthesis. Functionally, catalyzes the decarboxylation of L-tyrosine to produce tyramine for methanofuran biosynthesis. Can also catalyze the decarboxylation of L-aspartate to produce beta-alanine for coenzyme A (CoA) biosynthesis. The polypeptide is Probable L-tyrosine/L-aspartate decarboxylase (Methanopyrus kandleri (strain AV19 / DSM 6324 / JCM 9639 / NBRC 100938)).